Here is a 284-residue protein sequence, read N- to C-terminus: 4-diphosphocytidyl-2-C-methyl-D-erythritol kinase (284 aa).

Lys9 is a catalytic residue. ATP is bound at residue 90 to 100 (PLVSGLGGDSS). Asp132 is an active-site residue.

The protein belongs to the GHMP kinase family. IspE subfamily.

The catalysed reaction is 4-CDP-2-C-methyl-D-erythritol + ATP = 4-CDP-2-C-methyl-D-erythritol 2-phosphate + ADP + H(+). It functions in the pathway isoprenoid biosynthesis; isopentenyl diphosphate biosynthesis via DXP pathway; isopentenyl diphosphate from 1-deoxy-D-xylulose 5-phosphate: step 3/6. Functionally, catalyzes the phosphorylation of the position 2 hydroxy group of 4-diphosphocytidyl-2C-methyl-D-erythritol. This Dehalococcoides mccartyi (strain ATCC BAA-2100 / JCM 16839 / KCTC 5957 / BAV1) protein is 4-diphosphocytidyl-2-C-methyl-D-erythritol kinase.